The primary structure comprises 238 residues: MAQVSMRDMLNAGVHYGHQTRYWNPKMKPFIFGARNGVHVINLEKTLPLFNEALAELTRISSNNGKILFVGTKRAASEAVKAAAVDCQQFYVNHRWLGGMLTNWKTVRQSIKRLKDLETQTQDGTFDKITKKEALMRTRELEKLELSLGGIKDMAGLPDAIFVIGADHEHIAIKEANNLGIPVFAIVDTNSTPDGVNYIIPGNDDATRAIQLYLDAAAAAVKEGRGSNVEAELEATAE.

This sequence belongs to the universal ribosomal protein uS2 family.

The sequence is that of Small ribosomal subunit protein uS2 from Actinobacillus pleuropneumoniae serotype 7 (strain AP76).